Here is a 634-residue protein sequence, read N- to C-terminus: Lamin tail domain-containing protein 2 (634 aa).

Positions 1–44 (MRWLRPAGRRREQESVSGHLGPPAGAPAAPETPTCLPDTTPHPA) are disordered. A coiled-coil region spans residues 106–169 (SHSQEKLLQN…QKSCLLQLAR (64 aa)). Positions 228 to 237 (FTNMEPSSKQ) are enriched in polar residues. Disordered stretches follow at residues 228–349 (FTNM…TDPD) and 464–575 (HRIP…PAEA). Residues 276 to 287 (SSSGGADSDSSS) are compositionally biased toward low complexity. Positions 310–321 (SEQALVQAGSYS) are enriched in polar residues. The span at 322 to 337 (RDSEDLQKTHSPRHGE) shows a compositional bias: basic and acidic residues. The LTD domain maps to 350–468 (HWSPELLQSP…EVLSEHRIPR (119 aa)). Basic residues predominate over residues 502–513 (PPRPPRPLRKGR). Basic and acidic residues predominate over residues 540–550 (HAREGPARPEN).

This is Lamin tail domain-containing protein 2 (LMNTD2) from Homo sapiens (Human).